The primary structure comprises 673 residues: Protein VirD3 (673 aa).

Disordered regions lie at residues Val-36 to Gly-73, Ser-171 to Val-216, Glu-229 to Ser-409, Arg-478 to Phe-497, Glu-520 to Leu-552, and Asp-585 to Arg-673. 4 stretches are compositionally biased toward polar residues: residues Ser-171–Gln-183, Val-193–Val-216, Ser-234–Ser-246, and Gln-268–Pro-277. Low complexity predominate over residues Asn-278 to Ser-287. Over residues Ala-288 to Glu-303 the composition is skewed to basic and acidic residues. Basic and acidic residues-rich tracts occupy residues Glu-520–Phe-534 and Ala-638–Arg-673.

The chain is Protein VirD3 (virD3) from Agrobacterium fabrum (strain C58 / ATCC 33970) (Agrobacterium tumefaciens (strain C58)).